A 420-amino-acid chain; its full sequence is Glutamyl-tRNA reductase (420 aa).

Substrate contacts are provided by residues 49-52 (TCNR), Ser109, 114-116 (EPQ), and Gln120. The Nucleophile role is filled by Cys50. Position 189-194 (189-194 (GAGETI)) interacts with NADP(+).

It belongs to the glutamyl-tRNA reductase family. As to quaternary structure, homodimer.

The catalysed reaction is (S)-4-amino-5-oxopentanoate + tRNA(Glu) + NADP(+) = L-glutamyl-tRNA(Glu) + NADPH + H(+). It functions in the pathway porphyrin-containing compound metabolism; protoporphyrin-IX biosynthesis; 5-aminolevulinate from L-glutamyl-tRNA(Glu): step 1/2. Functionally, catalyzes the NADPH-dependent reduction of glutamyl-tRNA(Glu) to glutamate 1-semialdehyde (GSA). This is Glutamyl-tRNA reductase from Sodalis glossinidius (strain morsitans).